A 168-amino-acid polypeptide reads, in one-letter code: Small ribosomal subunit protein uS5 (168 aa).

The region spanning 12-75 (YQEKLVSVTR…DQAKKNMVYI (64 aa)) is the S5 DRBM domain.

It belongs to the universal ribosomal protein uS5 family. Part of the 30S ribosomal subunit. Contacts proteins S4 and S8.

Its function is as follows. With S4 and S12 plays an important role in translational accuracy. Located at the back of the 30S subunit body where it stabilizes the conformation of the head with respect to the body. The polypeptide is Small ribosomal subunit protein uS5 (Legionella pneumophila (strain Paris)).